The chain runs to 121 residues: MKLIFTEYSAILIFFAISSLLSSVIFLLSYFLIPQKPDQEKVSAYECGFNPFDDARATFDIRFYLVAILFLIFDLEISFLFPWSLVLGEISIIGFWSMIVFLVILTIGFIYEWYKGALEWE.

3 consecutive transmembrane segments (helical) span residues 11–31 (ILIF…LSYF), 63–83 (FYLV…LFPW), and 90–110 (ISII…IGFI).

Belongs to the complex I subunit 3 family.

The protein localises to the mitochondrion membrane. The catalysed reaction is a ubiquinone + NADH + 5 H(+)(in) = a ubiquinol + NAD(+) + 4 H(+)(out). In terms of biological role, core subunit of the mitochondrial membrane respiratory chain NADH dehydrogenase (Complex I) that is believed to belong to the minimal assembly required for catalysis. Complex I functions in the transfer of electrons from NADH to the respiratory chain. The immediate electron acceptor for the enzyme is believed to be ubiquinone. The protein is NADH-ubiquinone oxidoreductase chain 3 (ND3) of Chondrus crispus (Carrageen Irish moss).